The sequence spans 255 residues: Large ribosomal subunit protein uL4 (255 aa).

Belongs to the universal ribosomal protein uL4 family. Part of the 50S ribosomal subunit.

One of the primary rRNA binding proteins, this protein initially binds near the 5'-end of the 23S rRNA. It is important during the early stages of 50S assembly. It makes multiple contacts with different domains of the 23S rRNA in the assembled 50S subunit and ribosome. Its function is as follows. Forms part of the polypeptide exit tunnel. The sequence is that of Large ribosomal subunit protein uL4 from Thermococcus kodakarensis (strain ATCC BAA-918 / JCM 12380 / KOD1) (Pyrococcus kodakaraensis (strain KOD1)).